A 368-amino-acid chain; its full sequence is Phospho-N-acetylmuramoyl-pentapeptide-transferase (368 aa).

A run of 10 helical transmembrane segments spans residues 34 to 54 (GAVVTGALFVFLFGPWIIDHL), 79 to 99 (TPTMGGLMILSGLVVSTVLWA), 102 to 122 (LNPYVWIVLAVTLGFGFVGFY), 140 to 160 (ARLLIEAAIALVACYALVRLG), 176 to 196 (LVIKFGWMYVIFGAFVIVGAG), 207 to 227 (GLAIVPVMIASASFGLIAYLA), 247 to 267 (LAVLCGAVLGAGLGFLWFNAP), 271 to 291 (IFMGDTGSLALGGMLGSIAVA), 296 to 316 (IVLAVIGGLFVLEAVSVIVQV), and 345 to 365 (QIVIRFWIISVMLALVGLSTL).

The protein belongs to the glycosyltransferase 4 family. MraY subfamily. It depends on Mg(2+) as a cofactor.

Its subcellular location is the cell inner membrane. It catalyses the reaction UDP-N-acetyl-alpha-D-muramoyl-L-alanyl-gamma-D-glutamyl-meso-2,6-diaminopimeloyl-D-alanyl-D-alanine + di-trans,octa-cis-undecaprenyl phosphate = di-trans,octa-cis-undecaprenyl diphospho-N-acetyl-alpha-D-muramoyl-L-alanyl-D-glutamyl-meso-2,6-diaminopimeloyl-D-alanyl-D-alanine + UMP. Its pathway is cell wall biogenesis; peptidoglycan biosynthesis. In terms of biological role, catalyzes the initial step of the lipid cycle reactions in the biosynthesis of the cell wall peptidoglycan: transfers peptidoglycan precursor phospho-MurNAc-pentapeptide from UDP-MurNAc-pentapeptide onto the lipid carrier undecaprenyl phosphate, yielding undecaprenyl-pyrophosphoryl-MurNAc-pentapeptide, known as lipid I. The polypeptide is Phospho-N-acetylmuramoyl-pentapeptide-transferase (Bradyrhizobium sp. (strain ORS 278)).